Consider the following 512-residue polypeptide: Cytochrome P450 71BT1 (512 aa).

The signal sequence occupies residues 1 to 24 (MENLFIFLFALLLFCFMLLKLSKK). Asparagine 111 and asparagine 168 each carry an N-linked (GlcNAc...) asparagine glycan. Cysteine 447 is a heme binding site.

The protein belongs to the cytochrome P450 family.

In Catharanthus roseus (Madagascar periwinkle), this protein is Cytochrome P450 71BT1.